The sequence spans 481 residues: UDP-N-acetylmuramate--L-alanine ligase (481 aa).

115-121 (GTHGKTT) contributes to the ATP binding site.

This sequence belongs to the MurCDEF family.

The protein resides in the cytoplasm. It catalyses the reaction UDP-N-acetyl-alpha-D-muramate + L-alanine + ATP = UDP-N-acetyl-alpha-D-muramoyl-L-alanine + ADP + phosphate + H(+). It functions in the pathway cell wall biogenesis; peptidoglycan biosynthesis. Cell wall formation. In Granulibacter bethesdensis (strain ATCC BAA-1260 / CGDNIH1), this protein is UDP-N-acetylmuramate--L-alanine ligase.